The primary structure comprises 391 residues: Chaperone protein DnaJ (391 aa).

The J domain maps to 4–68 (DFYDVLGVSR…ETRQQYDQLG (65 aa)). Residues 53–79 (DVLTDEETRQQYDQLGHERFEEAEKRG) are compositionally biased toward basic and acidic residues. Disordered stretches follow at residues 53-94 (DVLT…MGGA) and 117-136 (FFGGAGGGGGRGRSGPEQGR). Gly residues-rich tracts occupy residues 81–94 (TGNGGGGAGGMGGA) and 119–129 (GGAGGGGGRGR). The CR-type zinc finger occupies 152-234 (GVSKQVTVRR…CGGQGQTRER (83 aa)). Residues Cys165, Cys168, Cys182, Cys185, Cys208, Cys211, Cys222, and Cys225 each contribute to the Zn(2+) site. CXXCXGXG motif repeat units lie at residues 165–172 (CADCGGSG), 182–189 (CPQCDGQG), 208–215 (CSRCGGEG), and 222–229 (CSTCGGQG).

This sequence belongs to the DnaJ family. Homodimer. It depends on Zn(2+) as a cofactor.

The protein resides in the cytoplasm. Participates actively in the response to hyperosmotic and heat shock by preventing the aggregation of stress-denatured proteins and by disaggregating proteins, also in an autonomous, DnaK-independent fashion. Unfolded proteins bind initially to DnaJ; upon interaction with the DnaJ-bound protein, DnaK hydrolyzes its bound ATP, resulting in the formation of a stable complex. GrpE releases ADP from DnaK; ATP binding to DnaK triggers the release of the substrate protein, thus completing the reaction cycle. Several rounds of ATP-dependent interactions between DnaJ, DnaK and GrpE are required for fully efficient folding. Also involved, together with DnaK and GrpE, in the DNA replication of plasmids through activation of initiation proteins. The protein is Chaperone protein DnaJ of Halobacterium salinarum (strain ATCC 29341 / DSM 671 / R1).